Here is an 84-residue protein sequence, read N- to C-terminus: uncharacterized protein (84 aa).

The region spanning 7–62 is the HTH cro/C1-type domain; that stretch reads IDVMLAKRKMSVTELSERVGITMANLSILKNGKAKAIRLSTLEAICKALECQPGDI. Residues 18–37 constitute a DNA-binding region (H-T-H motif); that stretch reads VTELSERVGITMANLSILKN.

This is an uncharacterized protein from Bacillus subtilis (strain 168).